A 249-amino-acid chain; its full sequence is ATP synthase subunit a (249 aa).

Transmembrane regions (helical) follow at residues 30–50, 86–106, 115–135, 142–162, 191–211, and 218–238; these read QSPVMMIVASVLVLAFLYVGM, FFPFIFTLFFFILAGNYLGLL, HIAVTLALALLVFVLAVIVSL, FFAHFMPAGAPVALAPLLVPI, MFAAFTIMLAGLGLFGDVLAV, and VALMALELLVGALQAYVFAIL.

Belongs to the ATPase A chain family. F-type ATPases have 2 components, CF(1) - the catalytic core - and CF(0) - the membrane proton channel. CF(1) has five subunits: alpha(3), beta(3), gamma(1), delta(1), epsilon(1). CF(0) has three main subunits: a(1), b(2) and c(9-12). The alpha and beta chains form an alternating ring which encloses part of the gamma chain. CF(1) is attached to CF(0) by a central stalk formed by the gamma and epsilon chains, while a peripheral stalk is formed by the delta and b chains.

The protein resides in the cell inner membrane. Its function is as follows. Key component of the proton channel; it plays a direct role in the translocation of protons across the membrane. The chain is ATP synthase subunit a from Gluconacetobacter diazotrophicus (strain ATCC 49037 / DSM 5601 / CCUG 37298 / CIP 103539 / LMG 7603 / PAl5).